The sequence spans 129 residues: Ribonuclease P protein component (129 aa).

This sequence belongs to the RnpA family. In terms of assembly, consists of a catalytic RNA component (M1 or rnpB) and a protein subunit.

The enzyme catalyses Endonucleolytic cleavage of RNA, removing 5'-extranucleotides from tRNA precursor.. Its function is as follows. RNaseP catalyzes the removal of the 5'-leader sequence from pre-tRNA to produce the mature 5'-terminus. It can also cleave other RNA substrates such as 4.5S RNA. The protein component plays an auxiliary but essential role in vivo by binding to the 5'-leader sequence and broadening the substrate specificity of the ribozyme. The sequence is that of Ribonuclease P protein component from Corynebacterium jeikeium (strain K411).